Here is a 581-residue protein sequence, read N- to C-terminus: MNDKDLSTWQTFCRLWPIVSPFRIGLIVAAVALILNAAGDTLMLSLLKPLLDEGFGKASSDVLKWMPLIVIALMIMRGLSGFVSSYCISWVSGKVVMQMRRRLFSHMMGMPVSFFDQQSTGTLLSRITYDSEQVASSSSSALITVVREGASIIGLFVLMFYYSWQLSLILIVIAPIVSLVIRVVSKRFRSISKNMQNSMGQVTASAEQMLKGHKEVLIFGGQNVETERFNKVSNHMRQQGMKMVSASSISDPIIQLIASFALAFVLYAASFPDIMETLTAGKITVVFSSMIALMRPLKSLTNVNAQFQRGMAACQTLFSILDMEQEKDDGKLELKKANGDIEFRNVTFCYPTKELPALQNISMYIPAGKIVALVGRSGSGKSTIANLLTRFYDVNEGNIFLDGHDLREYKLSSLRGQVALVSQNVHLFNDTVANNIAYASENRYSREEIEKAAEMAYAMDFIRKLDNGLDTMIGENGVLLSGGQRQRIAIARALLRDSPVLILDEATSALDTESERAIQAALDELQKNRTSLVIAHRLSTIENADEILVVEDGHIVERGDHLSLLERNGVYSQLHRMQFGQ.

5 helical membrane-spanning segments follow: residues 15–35, 68–88, 152–172, 252–272, and 274–294; these read LWPI…ALIL, LIVI…SYCI, IIGL…ILIV, PIIQ…ASFP, and IMET…IALM. The ABC transmembrane type-1 domain maps to 27 to 309; that stretch reads IVAAVALILN…LTNVNAQFQR (283 aa). The 237-residue stretch at 341–577 folds into the ABC transporter domain; sequence IEFRNVTFCY…NGVYSQLHRM (237 aa). Position 375–382 (375–382) interacts with ATP; that stretch reads GRSGSGKS.

This sequence belongs to the ABC transporter superfamily. Lipid exporter (TC 3.A.1.106) family. In terms of assembly, homodimer.

It is found in the cell inner membrane. The enzyme catalyses ATP + H2O + lipid A-core oligosaccharideSide 1 = ADP + phosphate + lipid A-core oligosaccharideSide 2.. Its function is as follows. Involved in lipopolysaccharide (LPS) biosynthesis. Translocates lipid A-core from the inner to the outer leaflet of the inner membrane. Transmembrane domains (TMD) form a pore in the inner membrane and the ATP-binding domain (NBD) is responsible for energy generation. The protein is ATP-dependent lipid A-core flippase of Photorhabdus laumondii subsp. laumondii (strain DSM 15139 / CIP 105565 / TT01) (Photorhabdus luminescens subsp. laumondii).